The following is a 449-amino-acid chain: Glucose-6-phosphate isomerase (449 aa).

Glu290 serves as the catalytic Proton donor. Active-site residues include His311 and Lys425.

The protein belongs to the GPI family.

The protein resides in the cytoplasm. The enzyme catalyses alpha-D-glucose 6-phosphate = beta-D-fructose 6-phosphate. It functions in the pathway carbohydrate biosynthesis; gluconeogenesis. The protein operates within carbohydrate degradation; glycolysis; D-glyceraldehyde 3-phosphate and glycerone phosphate from D-glucose: step 2/4. Functionally, catalyzes the reversible isomerization of glucose-6-phosphate to fructose-6-phosphate. This chain is Glucose-6-phosphate isomerase, found in Exiguobacterium sibiricum (strain DSM 17290 / CCUG 55495 / CIP 109462 / JCM 13490 / 255-15).